A 295-amino-acid polypeptide reads, in one-letter code: Ribosomal protein L11 methyltransferase (295 aa).

Positions 145, 166, 188, and 230 each coordinate S-adenosyl-L-methionine.

It belongs to the methyltransferase superfamily. PrmA family.

It is found in the cytoplasm. The enzyme catalyses L-lysyl-[protein] + 3 S-adenosyl-L-methionine = N(6),N(6),N(6)-trimethyl-L-lysyl-[protein] + 3 S-adenosyl-L-homocysteine + 3 H(+). Its function is as follows. Methylates ribosomal protein L11. This chain is Ribosomal protein L11 methyltransferase, found in Shewanella amazonensis (strain ATCC BAA-1098 / SB2B).